The primary structure comprises 476 residues: 1-aminocyclopropane-1-carboxylate synthase 4 (476 aa).

K282 is subject to N6-(pyridoxal phosphate)lysine.

The protein belongs to the class-I pyridoxal-phosphate-dependent aminotransferase family. Homodimer. The cofactor is pyridoxal 5'-phosphate.

It carries out the reaction S-adenosyl-L-methionine = 1-aminocyclopropane-1-carboxylate + S-methyl-5'-thioadenosine + H(+). It functions in the pathway alkene biosynthesis; ethylene biosynthesis via S-adenosyl-L-methionine; ethylene from S-adenosyl-L-methionine: step 1/2. Catalyzes the formation of 1-aminocyclopropane-1-carboxylate, a direct precursor of ethylene in higher plants. The chain is 1-aminocyclopropane-1-carboxylate synthase 4 (ACS4) from Solanum lycopersicum (Tomato).